The primary structure comprises 126 residues: Large ribosomal subunit protein bL17 (126 aa).

The protein belongs to the bacterial ribosomal protein bL17 family. As to quaternary structure, part of the 50S ribosomal subunit. Contacts protein L32.

This is Large ribosomal subunit protein bL17 from Aliivibrio salmonicida (strain LFI1238) (Vibrio salmonicida (strain LFI1238)).